A 337-amino-acid polypeptide reads, in one-letter code: Glyceraldehyde-3-phosphate dehydrogenase (337 aa).

Residues 13-14 (RI), D35, and R80 contribute to the NAD(+) site. Residues 150–152 (SCT), T181, 210–211 (TG), and R233 each bind D-glyceraldehyde 3-phosphate. Residue C151 is the Nucleophile of the active site. N315 contacts NAD(+).

Belongs to the glyceraldehyde-3-phosphate dehydrogenase family. As to quaternary structure, homotetramer.

The protein resides in the cytoplasm. The catalysed reaction is D-glyceraldehyde 3-phosphate + phosphate + NAD(+) = (2R)-3-phospho-glyceroyl phosphate + NADH + H(+). It participates in carbohydrate degradation; glycolysis; pyruvate from D-glyceraldehyde 3-phosphate: step 1/5. The protein is Glyceraldehyde-3-phosphate dehydrogenase (GPDA) of Colletotrichum lindemuthianum (Bean anthracnose fungus).